The primary structure comprises 295 residues: Pantothenate synthetase (295 aa).

30-37 (MGNLHDGH) is a binding site for ATP. H37 acts as the Proton donor in catalysis. Q61 is a binding site for (R)-pantoate. Position 61 (Q61) interacts with beta-alanine. 149–152 (GEKD) serves as a coordination point for ATP. Residue Q155 participates in (R)-pantoate binding. Residues V178 and 186-189 (MSSR) contribute to the ATP site.

This sequence belongs to the pantothenate synthetase family. As to quaternary structure, homodimer.

The protein localises to the cytoplasm. It carries out the reaction (R)-pantoate + beta-alanine + ATP = (R)-pantothenate + AMP + diphosphate + H(+). It functions in the pathway cofactor biosynthesis; (R)-pantothenate biosynthesis; (R)-pantothenate from (R)-pantoate and beta-alanine: step 1/1. In terms of biological role, catalyzes the condensation of pantoate with beta-alanine in an ATP-dependent reaction via a pantoyl-adenylate intermediate. In Photobacterium profundum (strain SS9), this protein is Pantothenate synthetase.